The chain runs to 275 residues: Autophagy protein 5 (275 aa).

Methionine 1 is modified (N-acetylmethionine). A Glycyl lysine isopeptide (Lys-Gly) (interchain with G-Cter in ATG12) cross-link involves residue lysine 130.

Belongs to the ATG5 family. As to quaternary structure, forms a conjugate with ATG12. Part of the minor complex composed of 4 sets of ATG12-ATG5 and ATG16L1 (400 kDa); this complex interacts with ATG3 leading to disruption of ATG7 interaction and promotion of ATG8-like proteins lipidation. Forms an 800-kDa complex composed of ATG12-ATG5 and ATG16L2. The ATG12-ATG5 conjugate interacts with RAB33A; this interaction is bridged by ATG16L1 and promotes ATG12-ATG5-ATG16L1 complex recruitment to phagophores. Interacts with TECPR1; the interaction is direct and does not take place when ATG16L1 is associated with the ATG5-ATG12 conjugate. Interacts with DHX58/RIG-1, IFIH1/MDA5 and MAVS/IPS-1 in monomeric form as well as in ATG12-ATG5 conjugate form. The interaction with MAVS is further enhanced upon vesicular stomatitis virus (VSV) infection. Interacts with ATG3. Interacts with ATG7 and ATG10. Interacts with FADD. Interacts with Bassoon/BSN; this interaction is important for the regulation of presynaptic autophagy. Interacts with ATG16L2. In terms of processing, conjugated to ATG12; which is essential for autophagy, but is not required for association with isolation membrane. Post-translationally, acetylated by EP300. In terms of tissue distribution, ubiquitous.

Its subcellular location is the cytoplasm. The protein resides in the preautophagosomal structure membrane. In terms of biological role, involved in autophagic vesicle formation. Conjugation with ATG12, through a ubiquitin-like conjugating system involving ATG7 as an E1-like activating enzyme and ATG10 as an E2-like conjugating enzyme, is essential for its function. The ATG12-ATG5 conjugate acts as an E3-like enzyme which is required for lipidation of ATG8 family proteins and their association to the vesicle membranes. Involved in mitochondrial quality control after oxidative damage, and in subsequent cellular longevity. Plays a critical role in multiple aspects of lymphocyte development and is essential for both B and T lymphocyte survival and proliferation. Required for optimal processing and presentation of antigens for MHC II. Involved in the maintenance of axon morphology and membrane structures, as well as in normal adipocyte differentiation. Promotes primary ciliogenesis through removal of OFD1 from centriolar satellites and degradation of IFT20 via the autophagic pathway. As part of the ATG8 conjugation system with ATG12 and ATG16L1, required for recruitment of LRRK2 to stressed lysosomes and induction of LRRK2 kinase activity in response to lysosomal stress. Functionally, may play an important role in the apoptotic process, possibly within the modified cytoskeleton. Its expression is a relatively late event in the apoptotic process, occurring downstream of caspase activity. Plays a crucial role in IFN-gamma-induced autophagic cell death by interacting with FADD. Its function is as follows. (Microbial infection) May act as a proviral factor. In association with ATG12, negatively regulates the innate antiviral immune response by impairing the type I IFN production pathway upon vesicular stomatitis virus (VSV) infection. This is Autophagy protein 5 from Mus musculus (Mouse).